A 298-amino-acid polypeptide reads, in one-letter code: Probable alpha-L-glutamate ligase (298 aa).

An ATP-grasp domain is found at 108 to 290 (LQLLLKTGVP…IAAEIIDYIE (183 aa)). ATP is bound by residues lysine 144, 181–182 (DF), aspartate 190, and 214–216 (RAN). Residues aspartate 251, glutamate 263, and asparagine 265 each contribute to the Mg(2+) site. 3 residues coordinate Mn(2+): aspartate 251, glutamate 263, and asparagine 265.

It belongs to the RimK family. It depends on Mg(2+) as a cofactor. Mn(2+) serves as cofactor.

This chain is Probable alpha-L-glutamate ligase, found in Haemophilus influenzae (strain PittEE).